The following is a 1202-amino-acid chain: DNA-directed RNA polymerase subunit beta (1202 aa).

It belongs to the RNA polymerase beta chain family. In terms of assembly, the RNAP catalytic core consists of 2 alpha, 1 beta, 1 beta' and 1 omega subunit. When a sigma factor is associated with the core the holoenzyme is formed, which can initiate transcription.

It carries out the reaction RNA(n) + a ribonucleoside 5'-triphosphate = RNA(n+1) + diphosphate. Its function is as follows. DNA-dependent RNA polymerase catalyzes the transcription of DNA into RNA using the four ribonucleoside triphosphates as substrates. The protein is DNA-directed RNA polymerase subunit beta of Leuconostoc mesenteroides subsp. mesenteroides (strain ATCC 8293 / DSM 20343 / BCRC 11652 / CCM 1803 / JCM 6124 / NCDO 523 / NBRC 100496 / NCIMB 8023 / NCTC 12954 / NRRL B-1118 / 37Y).